A 343-amino-acid polypeptide reads, in one-letter code: Aspartate carbamoyltransferase catalytic subunit (343 aa).

Residues Arg-91 and Thr-92 each contribute to the carbamoyl phosphate site. Residue Lys-119 coordinates L-aspartate. Arg-141, His-171, and Gln-174 together coordinate carbamoyl phosphate. Residues Arg-204 and Arg-259 each coordinate L-aspartate. Residues Gly-300 and Pro-301 each coordinate carbamoyl phosphate.

The protein belongs to the aspartate/ornithine carbamoyltransferase superfamily. ATCase family. As to quaternary structure, heterododecamer (2C3:3R2) of six catalytic PyrB chains organized as two trimers (C3), and six regulatory PyrI chains organized as three dimers (R2).

The catalysed reaction is carbamoyl phosphate + L-aspartate = N-carbamoyl-L-aspartate + phosphate + H(+). It participates in pyrimidine metabolism; UMP biosynthesis via de novo pathway; (S)-dihydroorotate from bicarbonate: step 2/3. Catalyzes the condensation of carbamoyl phosphate and aspartate to form carbamoyl aspartate and inorganic phosphate, the committed step in the de novo pyrimidine nucleotide biosynthesis pathway. The sequence is that of Aspartate carbamoyltransferase catalytic subunit from Burkholderia orbicola (strain MC0-3).